A 1030-amino-acid polypeptide reads, in one-letter code: ADAMTS-like protein 4 (1030 aa).

Positions 1-24 (MELWLGRLWLYVMLLLLLLQLCQD) are cleaved as a signal peptide. The 45-residue stretch at 47–91 (GPWGRWASCSQPCGVGVQRRSRTCELHPALSLPPRPPRHPEAPQP) folds into the TSP type-1 1 domain. Disordered stretches follow at residues 73 to 150 (HPAL…KPGM) and 168 to 306 (LAHK…LPLT). Polar residues-rich tracts occupy residues 176–186 (KDSSTAEETLP), 211–237 (QSRS…SSAP), and 245–257 (PTSS…SFQG). Asn-451 and Asn-731 each carry an N-linked (GlcNAc...) asparagine glycan. TSP type-1 domains lie at 681 to 740 (CPPY…QLRL), 741 to 800 (CGHW…GPCT), 803 to 865 (WFYS…GPCE), 866 to 925 (KTWR…QGQA), and 926 to 982 (CEDQ…QPCN). The region spanning 985–1022 (PDDQCKDSSPHCPLVVQARLCVYPYYTATCCRSCAHVL) is the PLAC domain.

Interacts with CTSB. Interacts with FBN1. In terms of processing, glycosylated. Can be O-fucosylated by POFUT2 on a serine or a threonine residue found within the consensus sequence C1-X(2)-(S/T)-C2-G of the TSP type-1 repeat domains where C1 and C2 are the first and second cysteine residue of the repeat, respectively. Fucosylated repeats can then be further glycosylated by the addition of a beta-1,3-glucose residue by the glucosyltransferase, B3GALTL. Fucosylation mediates the efficient secretion of ADAMTS family members. Can also be C-glycosylated with one or two mannose molecules on tryptophan residues within the consensus sequence W-X-X-W of the TPRs, and N-glycosylated. These other glycosylations can also facilitate secretion.

Its subcellular location is the secreted. The protein localises to the extracellular space. The protein resides in the extracellular matrix. Functionally, positive regulation of apoptosis. May facilitate FBN1 microfibril biogenesis. The sequence is that of ADAMTS-like protein 4 from Rattus norvegicus (Rat).